The sequence spans 1130 residues: Roquin-1 (1130 aa).

The Zn(2+) site is built by Cys14, Cys17, Cys33, His35, Cys38, Cys50, and Asp53. The segment at Cys14–Gln54 adopts an RING-type; degenerate zinc-finger fold. The HEPN-N stretch occupies residues Val128–Pro176. Residues Gln177–Thr326 are ROQ. An HEPN-C region spans residues Pro327–Ser399. The C3H1-type zinc-finger motif lies at Lys413–Glu441. Ser462 carries the post-translational modification Phosphoserine. 2 disordered regions span residues Leu493–Pro567 and Pro722–Asp750. A compositionally biased stretch (polar residues) spans Ile497–Gln506. A phosphoserine mark is found at Ser531 and Ser535. 2 stretches are compositionally biased toward pro residues: residues Asn553–Pro567 and Pro732–His746. A phosphoserine mark is found at Ser861, Ser1107, and Ser1110. A disordered region spans residues Lys1100–Pro1130. Residues Asn1116–Pro1130 are compositionally biased toward polar residues.

As to quaternary structure, interacts with DDX6 and EDC4. Interacts with CCR4-NOT deadenylase complex. Interacts with RC3H1; the interaction is RNA independent. Post-translationally, proteolytically cleaved after Arg-510 and Arg-579 by MALT1 in activated CD4(+) T cells; cleavage at Arg-510 and Arg-579 is critical for promoting RC3H1 degradation in response to T-cell receptor (TCR) stimulation, and hence is necessary for prolonging the stability of a set of mRNAs controlling Th17 cell differentiation. In terms of tissue distribution, widely expressed, with highest levels in lymph node and thymus and slightly lesser amounts in brain, lung, and spleen (at protein level). Very weak expression in heart, muscle, and kidney (at protein level). Expressed in CD4(+) helper T-cells (at protein level).

The protein resides in the cytoplasm. The protein localises to the P-body. It localises to the cytoplasmic granule. It catalyses the reaction S-ubiquitinyl-[E2 ubiquitin-conjugating enzyme]-L-cysteine + [acceptor protein]-L-lysine = [E2 ubiquitin-conjugating enzyme]-L-cysteine + N(6)-ubiquitinyl-[acceptor protein]-L-lysine.. It participates in protein modification; protein ubiquitination. Its function is as follows. Post-transcriptional repressor of mRNAs containing a conserved stem loop motif, called constitutive decay element (CDE), which is often located in the 3'-UTR, as in HMGXB3, ICOS, IER3, NFKBID, NFKBIZ, PPP1R10, TNF, TNFRSF4 and in many more mRNAs. Cleaves translationally inactive mRNAs harboring a stem-loop (SL), often located in their 3'-UTRs, during the early phase of inflammation in a helicase UPF1-independent manner. Binds to CDE and promotes mRNA deadenylation and degradation. This process does not involve miRNAs. In follicular helper T (Tfh) cells, represses of ICOS and TNFRSF4/Ox40 expression, thus preventing spontaneous Tfh cell differentiation, germinal center B-cell differentiation in the absence of immunization and autoimmunity. In resting or LPS-stimulated macrophages, controls inflammation by suppressing TNF expression. Also recognizes CDE in its own mRNA and in that of paralogous RC3H2, possibly leading to feedback loop regulation. Inhibits cooperatively with ZC3H12A the differentiation of helper T cells Th17 in lungs. They repress target mRNA encoding the Th17 cell-promoting factors IL6, ICOS, REL, IRF4, NFKBID and NFKBIZ. The cooperation requires RNA-binding by RC3H1 and the nuclease activity of ZC3H12A. Recognizes and binds mRNAs containing a hexaloop stem-loop motif, called alternative decay element (ADE). Together with ZC3H12A, destabilizes TNFRSF4/OX40 mRNA by binding to the conserved stem loop structure in its 3'UTR. Able to interact with double-stranded RNA. miRNA-binding protein that regulates microRNA homeostasis. Enhances DICER-mediated processing of pre-MIR146a but reduces mature MIR146a levels through an increase of 3' end uridylation. Both inhibits ICOS mRNA expression and they may act together to exert the suppression. Acts as a ubiquitin E3 ligase. Pairs with E2 enzymes UBE2A, UBE2B, UBE2D2, UBE2F, UBE2G1, UBE2G2 and UBE2L3 and produces polyubiquitin chains. Shows the strongest activity when paired with UBE2N:UBE2V1 or UBE2N:UBE2V2 E2 complexes and generate both short and long polyubiquitin chains. This Mus musculus (Mouse) protein is Roquin-1.